The following is a 462-amino-acid chain: Protein phosphatase 1M (462 aa).

The segment covering 1–10 (MSAGWFRRRF) has biased composition (basic residues). The tract at residues 1–66 (MSAGWFRRRF…PVRSPARGRT (66 aa)) is disordered. Residues 100 to 452 (EFGIEEDQEW…DDVSVFVIPL (353 aa)) form the PPM-type phosphatase domain. Residues D127 and G128 each contribute to the Mn(2+) site.

This sequence belongs to the PP2C family. Requires Mg(2+) as cofactor. The cofactor is Mn(2+). Widely expressed with highest levels in testis and lower levels in lung, kidney and brain.

The protein localises to the nucleus. It catalyses the reaction O-phospho-L-seryl-[protein] + H2O = L-seryl-[protein] + phosphate. The catalysed reaction is O-phospho-L-threonyl-[protein] + H2O = L-threonyl-[protein] + phosphate. This is Protein phosphatase 1M from Mus musculus (Mouse).